Reading from the N-terminus, the 906-residue chain is Protein translocase subunit SecA (906 aa).

ATP is bound by residues Q87, 105 to 109 (GEGKT), and D521. Residues 849-865 (STATAAEPAPEASQSQS) are compositionally biased toward low complexity. A disordered region spans residues 849 to 897 (STATAAEPAPEASQSQSTNDATASQNPPITEVEASKVGRNQPCPCGSGK). Polar residues predominate over residues 866–876 (TNDATASQNPP). Residues C891, C893, C902, and C903 each coordinate Zn(2+).

This sequence belongs to the SecA family. As to quaternary structure, monomer and homodimer. Part of the essential Sec protein translocation apparatus which comprises SecA, SecYEG and auxiliary proteins SecDF-YajC and YidC. Requires Zn(2+) as cofactor.

Its subcellular location is the cell inner membrane. The protein localises to the cytoplasm. The enzyme catalyses ATP + H2O + cellular proteinSide 1 = ADP + phosphate + cellular proteinSide 2.. Its function is as follows. Part of the Sec protein translocase complex. Interacts with the SecYEG preprotein conducting channel. Has a central role in coupling the hydrolysis of ATP to the transfer of proteins into and across the cell membrane, serving both as a receptor for the preprotein-SecB complex and as an ATP-driven molecular motor driving the stepwise translocation of polypeptide chains across the membrane. This chain is Protein translocase subunit SecA, found in Dichelobacter nodosus (strain VCS1703A).